The following is a 160-amino-acid chain: MPRKGPVPPREIPPDPKYGDVLVQKLINKVMKDGKKSVAEWIVYTALEEAAKEVNMHPVELLHKVIEKLKPEWEVRPTRVGGATYQVPIEVPERRQISLAIKWLVQAARERPRGREQYTMIERLKAELLDALNERGGAYKKKEETHRMAHANMVFSHFRW.

This sequence belongs to the universal ribosomal protein uS7 family. As to quaternary structure, part of the 30S ribosomal subunit. Contacts proteins S9 and S11.

One of the primary rRNA binding proteins, it binds directly to 16S rRNA where it nucleates assembly of the head domain of the 30S subunit. Is located at the subunit interface close to the decoding center, probably blocks exit of the E-site tRNA. The sequence is that of Small ribosomal subunit protein uS7A from Aquifex aeolicus (strain VF5).